A 177-amino-acid polypeptide reads, in one-letter code: MSRTNISALSPMQKLARNPAVIAMTLALALAGCANKKNMPNSAGELGLGGAGSATPGSQQDFTVNVGDRIFFDTDSTSIRADAQQTLQRQAQWLSRYPNYAITVEGHADERGTREYNLALGARRAAATRDFLASQGVPASRMKTISYGKEKPVAVCDDISCWSQNRRAVTVLGGAGM.

The first 32 residues, 1-32 (MSRTNISALSPMQKLARNPAVIAMTLALALAG), serve as a signal peptide directing secretion. C33 carries N-palmitoyl cysteine lipidation. The S-diacylglycerol cysteine moiety is linked to residue C33. Positions 59–176 (QQDFTVNVGD…RAVTVLGGAG (118 aa)) constitute an OmpA-like domain.

Belongs to the Pal lipoprotein family. In terms of assembly, the Tol-Pal system is composed of five core proteins: the inner membrane proteins TolA, TolQ and TolR, the periplasmic protein TolB and the outer membrane protein Pal. They form a network linking the inner and outer membranes and the peptidoglycan layer.

Its subcellular location is the cell outer membrane. Functionally, part of the Tol-Pal system, which plays a role in outer membrane invagination during cell division and is important for maintaining outer membrane integrity. This Agrobacterium fabrum (strain C58 / ATCC 33970) (Agrobacterium tumefaciens (strain C58)) protein is Peptidoglycan-associated lipoprotein.